The chain runs to 98 residues: NADH-ubiquinone oxidoreductase chain 4L (98 aa).

3 helical membrane passes run 1–21 (MSLT…GLLM), 29–49 (SLLC…ITIL), and 61–81 (IILL…LVMV).

It belongs to the complex I subunit 4L family. Core subunit of respiratory chain NADH dehydrogenase (Complex I) which is composed of 45 different subunits.

The protein localises to the mitochondrion inner membrane. The enzyme catalyses a ubiquinone + NADH + 5 H(+)(in) = a ubiquinol + NAD(+) + 4 H(+)(out). Its function is as follows. Core subunit of the mitochondrial membrane respiratory chain NADH dehydrogenase (Complex I) which catalyzes electron transfer from NADH through the respiratory chain, using ubiquinone as an electron acceptor. Part of the enzyme membrane arm which is embedded in the lipid bilayer and involved in proton translocation. The polypeptide is NADH-ubiquinone oxidoreductase chain 4L (MT-ND4L) (Mystacina tuberculata (New Zealand lesser short-tailed bat)).